A 1706-amino-acid polypeptide reads, in one-letter code: Cadherin-99C (1706 aa).

Positions 1-28 are cleaved as a signal peptide; sequence MAARNSLTPQQGLGFFGLLILLCSAVLG. At 29-1395 the chain is on the extracellular side; sequence KSQMCEVETG…AIDNEVFPFT (1367 aa). 11 consecutive Cadherin domains span residues 68-142, 143-264, 277-387, 388-500, 519-604, 605-704, 707-807, 808-908, 909-1005, 1038-1148, and 1156-1270; these read DPDT…APRF, MNTP…DPSF, INPE…PPVI, SSSQ…APKL, VTQV…PPRF, QKPI…NPEF, STLP…VPKF, SDAR…PPRF, ITVP…RVDV, SDDS…APEF, and QQDT…ALSF. 2 N-linked (GlcNAc...) asparagine glycosylation sites follow: asparagine 105 and asparagine 188. Residues asparagine 442, asparagine 553, asparagine 620, and asparagine 753 are each glycosylated (N-linked (GlcNAc...) asparagine). Residues asparagine 1053, asparagine 1088, and asparagine 1108 are each glycosylated (N-linked (GlcNAc...) asparagine). Asparagine 1311 and asparagine 1367 each carry an N-linked (GlcNAc...) asparagine glycan. Residues 1396-1416 traverse the membrane as a helical segment; that stretch reads LIAISLVILILGTIGIIYICI. Topologically, residues 1417 to 1706 are cytoplasmic; it reads SWSKYKNFKQ…RSEVETTTEL (290 aa).

In terms of assembly, interacts (via the cytoplasmic domain) with ck. Interacts (via the cytoplasmic domain) with Cul1 and Ubr3.

Its subcellular location is the apical cell membrane. The protein resides in the endosome membrane. The protein localises to the cell projection. It is found in the microvillus membrane. Cadherin that functions in epithelial morphogenesis and the intestine epithelial immune response. Essential for female fertility. Regulates the length and organization of apical microvilli in developing follicle cells and salivary glands. Function in the follicle cell is essential for egg development as the microvilli secrete eggshell material such as the vitelline membrane. Acts at least in part by regulating the recruitment of the myosin ck to the follicle cell microvilli. Also required to regulate cell rearrangements during salivary tube elongation, possibly by modulating cellular adhesion between the apical surface and apical extracellular matrix during epithelial tube elongation. May also function in cellular adhesion during the development of other tubular epithelia such as the trachea. Possibly functions as an apical membrane determinant which acts in apical membrane expansion during salivary and tracheal epithelial tube elongation. In salivary gland development, this function is independent of the other apical membrane determinants crb and sas. Essential downstream component of a hh-signaling pathway which regulates the Duox-dependent gut epithelial immune response to bacterial uracil; required for endosome formation in the enterocyte and activating norpA-dependent Ca2+ mobilization, which are essential steps in the Duox-dependent production of reactive oxygen species (ROS) in response to intestinal bacterial infection. This is Cadherin-99C from Drosophila melanogaster (Fruit fly).